The following is a 257-amino-acid chain: Putative hydro-lyase Bcenmc03_3969 (257 aa).

This sequence belongs to the D-glutamate cyclase family.

This chain is Putative hydro-lyase Bcenmc03_3969, found in Burkholderia orbicola (strain MC0-3).